Here is a 266-residue protein sequence, read N- to C-terminus: Glutamate racemase (266 aa).

Substrate is bound by residues 9-10 (DS) and 41-42 (YG). Cys72 acts as the Proton donor/acceptor in catalysis. 73–74 (NT) contacts substrate. Residue Cys183 is the Proton donor/acceptor of the active site. Position 184 to 185 (184 to 185 (TH)) interacts with substrate.

The protein belongs to the aspartate/glutamate racemases family.

It catalyses the reaction L-glutamate = D-glutamate. It functions in the pathway cell wall biogenesis; peptidoglycan biosynthesis. Its function is as follows. Provides the (R)-glutamate required for cell wall biosynthesis. This Listeria monocytogenes serotype 4b (strain CLIP80459) protein is Glutamate racemase.